The primary structure comprises 427 residues: Tol-Pal system protein TolB (427 aa).

Positions 1-23 are cleaved as a signal peptide; the sequence is MKLLKRLVSVFAIVLAVGSNAFA.

This sequence belongs to the TolB family. As to quaternary structure, the Tol-Pal system is composed of five core proteins: the inner membrane proteins TolA, TolQ and TolR, the periplasmic protein TolB and the outer membrane protein Pal. They form a network linking the inner and outer membranes and the peptidoglycan layer.

It is found in the periplasm. Functionally, part of the Tol-Pal system, which plays a role in outer membrane invagination during cell division and is important for maintaining outer membrane integrity. In Haemophilus influenzae (strain 86-028NP), this protein is Tol-Pal system protein TolB.